The primary structure comprises 93 residues: UPF0358 protein YlaN (93 aa).

Belongs to the UPF0358 family.

Essential for cell growth and for normal cell shape. The protein is UPF0358 protein YlaN (ylaN) of Bacillus subtilis (strain 168).